The primary structure comprises 910 residues: MKLTPMMRQYFEIKENYKDCILFFRLGDFYEMFFEDAETAARELELVLTGRDCGLEKRAPMCGIPFHASNSYIGRLVAKGYKVAICEQVEDPKFAKGIVKRDVIKVITPGTYTDSSFVEETKNNYIMTIYADLERNRCSLAITDISTGDFLATEGELEKGVILDEISKFNPKEIILLDSLDQELIKDITLTTPALISRKPIEYFEENFEEVLNNQFGEKSNSLSLMVKKSSNALVKYILDTQKISLTNINDIEVYSLVDFMTIDLSSRRNLELTENLREKSKKGSLLWVLDKTETSMGSRMLRRWIEEPLVNKEKITLRLNAVEELFNDLSLNDSLKEALHDIYDIERILGKISNKNANAKDLIALKTSIGKIPNVKGIIENCTSSLLKNYHHNLDDLRDIYDLLEKSIKEDPSLTLKDGDLIKDGFNGEIDELRLAKTNGKDWISSLENREREFTGIKSLKVGFNKVFGYYIEISKANYSSIPEGRYIRKQTLANAERFITPELKEIEEKLLGASEKLCSLEYDIFLDIRNEVENHIDRLKTTAKIIAELDCISNLAFVALENDFIKPEINEDGETKIENGRHPVVEKVIPKGEFIPNDTIINKDDNQLLIITGPNMAGKSTYMRQVAIITLMCQIGSFVPASKANISVVDKIFTRIGASDDLAGGKSTFMVEMWEVSNILKNATENSLVLLDEVGRGTSTYDGLSIAWSVIEYICKNKNLRCKTLFATHYHELTKLEGEIHGVRNYSVAVKEVDNNIIFLRKIIEGGADQSYGIEVAKLAGIPDEVINRAKEILETLEMESSKDNLDLALKEVNASKEDIEEASITTSYEVKETLVEEDKIEIKEEVISKASEAKTHKKEDDQIQLDFSAIGKDNLIKELSEVDILSLNPMEAMNRLYALVKEAKNLI.

615 to 622 contacts ATP; it reads GPNMAGKS.

The protein belongs to the DNA mismatch repair MutS family.

In terms of biological role, this protein is involved in the repair of mismatches in DNA. It is possible that it carries out the mismatch recognition step. This protein has a weak ATPase activity. This Clostridium perfringens (strain ATCC 13124 / DSM 756 / JCM 1290 / NCIMB 6125 / NCTC 8237 / Type A) protein is DNA mismatch repair protein MutS.